The following is a 241-amino-acid chain: Tetraspanin-1 (241 aa).

Topologically, residues 1–11 (MGCFNFIKVMM) are cytoplasmic. Residues 12 to 32 (ILFNMLIFLCGAALLAVGIWV) form a helical membrane-spanning segment. Residues 33 to 52 (SVDGPSFVKIFGPMSSSAMQ) are Extracellular-facing. A helical transmembrane segment spans residues 53-73 (FVNVGYFLIAAGAVLFALGFL). Topologically, residues 74-88 (GCYGAQTESKCALMT) are cytoplasmic. The chain crosses the membrane as a helical span at residues 89 to 109 (FFFILLLIFIAEVAAAVVALV). Over 110 to 211 (YTTLAENFLT…KQLLYDIRTN (102 aa)) the chain is Extracellular. 6 N-linked (GlcNAc...) asparagine glycosylation sites follow: N141, N154, N167, N180, N189, and N194. Residues 212-232 (AVTVGGVAAGIGGLELAAMIV) form a helical membrane-spanning segment. Topologically, residues 233 to 241 (SMYLYCNLE) are cytoplasmic.

It belongs to the tetraspanin (TM4SF) family. Interacts with SLC19A2. Interacts with NTRK1/TRKA.

It localises to the lysosome membrane. Its function is as follows. Structural component of specialized membrane microdomains known as tetraspanin-enriched microdomains (TERMs), which act as platforms for receptor clustering and signaling. Participates thereby in diverse biological functions such as cell signal transduction, adhesion, migration and protein trafficking. Regulates neuronal differentiation in response to NGF by facilitating NGF-mediated activation of NTRK1/TRKA receptor tyrosine kinase and subsequent downstream signaling pathways. Plays a role in the inhibition of TNFalpha-induced apoptosis. Mechanistically, inhibits the NF-kappa-B signaling pathway by blocking phosphorylation of CHUK. Also promotes the stability of the thiamine transporter 1/SLC19A2 in intestinal epithelial cells leading to an increase of thiamine uptake process. In Bos taurus (Bovine), this protein is Tetraspanin-1 (TSPAN1).